Here is a 199-residue protein sequence, read N- to C-terminus: MDSLLKKQRQFLYQFKNVRWAKGRHETYLCYVVKRRDSPTSFSLDFGHLRNKAGCHVELLFLRYISDWDLDPGRCYRVTWFTSWSPCYDCARHVADFLRGYPNLSLRIFTARLYFCDKERKAEPEGLRRLHRAGVQIAIMTFKDYFYCWNTFVENHERTFKAWEGLHENSVRLSRQLRRILLPLYEVDDLRDAFRTLGL.

Positions Met1 to Cys30 match the Bipartite nuclear localization signal motif. Residues Asp2–Glu26 are interaction with SUPT6H. The CMP/dCMP-type deaminase domain maps to Gly23–Leu130. Thr27 is modified (phosphothreonine; by PKA). Ser38 bears the Phosphoserine; by PKA mark. Residues Pro39–Phe42 form an important for interaction with CTNNBL1 region. His56 is a Zn(2+) binding site. Glu58 acts as the Proton donor in catalysis. Residues Cys87 and Cys90 each coordinate Zn(2+). Residues Tyr88–Cys116 form a required for interaction with RNF126 region. The short motif at Leu184–Leu199 is the Nuclear export signal element.

This sequence belongs to the cytidine and deoxycytidylate deaminase family. Interacts with CTNNBL1; the interaction is important for the immunoglobulin switch activity of AICDA. Interacts (via its NLS) with KPNA1. Interacts with PKA/PRKACA and PRKAR1A/PKR1. Interacts with SUPT6H, TRIM28 and NCL. Directly interacts with MCM3AP; this interaction may favor AICDA recruitment to immunoglobulin variable region genes, hence promoting somatic hypermutations. The cofactor is Zn(2+). Ser-38 is the major site whereas Thr-27 is the minor site of phosphorylation. Phosphorylation regulates its class-switch recombination activity. Post-translationally, probably monoubiquitinated on several residues by RNF126. In terms of tissue distribution, expressed in lymph nodes, spleen and thymus.

The protein resides in the nucleus. It localises to the cytoplasm. It catalyses the reaction a 2'-deoxycytidine in single-stranded DNA + H2O + H(+) = a 2'-deoxyuridine in single-stranded DNA + NH4(+). In terms of biological role, single-stranded DNA-specific cytidine deaminase. Involved in somatic hypermutation (SHM), gene conversion, and class-switch recombination (CSR) in B-lymphocytes by deaminating C to U during transcription of Ig-variable (V) and Ig-switch (S) region DNA. Required for several crucial steps of B-cell terminal differentiation necessary for efficient antibody responses. May also play a role in the epigenetic regulation of gene expression by participating in DNA demethylation. The chain is Single-stranded DNA cytosine deaminase (AICDA) from Bos taurus (Bovine).